Here is a 466-residue protein sequence, read N- to C-terminus: Glutamate--tRNA ligase 1 (466 aa).

A 'HIGH' region motif is present at residues 9–19 (PSPTGYLHIGG). Residues cysteine 98, cysteine 100, cysteine 125, and glutamate 127 each coordinate Zn(2+). The 'KMSKS' region motif lies at 236–240 (KLSKR). Residue lysine 239 participates in ATP binding.

It belongs to the class-I aminoacyl-tRNA synthetase family. Glutamate--tRNA ligase type 1 subfamily. As to quaternary structure, monomer. Requires Zn(2+) as cofactor.

It is found in the cytoplasm. The enzyme catalyses tRNA(Glu) + L-glutamate + ATP = L-glutamyl-tRNA(Glu) + AMP + diphosphate. Functionally, catalyzes the attachment of glutamate to tRNA(Glu) in a two-step reaction: glutamate is first activated by ATP to form Glu-AMP and then transferred to the acceptor end of tRNA(Glu). This chain is Glutamate--tRNA ligase 1, found in Acidithiobacillus ferrooxidans (strain ATCC 53993 / BNL-5-31) (Leptospirillum ferrooxidans (ATCC 53993)).